The sequence spans 479 residues: MTEDNEVQIAGMSIVIVCSVVDPASQNIKEHLLKLRDWVEMSVPGGIFDDLSAVYQSGNFYIIEVTEHHIYQDGIDRKIEEAGLDCDLLIFASKHKSADGRRLLTAHFTGNPGSADFGGYPGELSMAAPFALRCLLRNMAELSESIGFDVSMESTHHGPSDLDVPSVYAEIGSSEVEWVDQDAGDIVARSILSVRSGFCPVGIGFGGGHYAARQSELVLGSDISFGHNFPNYQLQFVDVDMFRKAVERSGADLVYCDRKAMSSDEKKRINELADEFGLDVLRESDIKGMEGVCWDIFRIFWHKVRDEGLSGRVKVPVGLKDKLSENVCDIFDFDVSNVVTVVIDNELLKLVRSVDAGGVKRLLDMSNVVYSERDDATISNHFYTFWNRDAEDFLTFIVDECIKILKGRYDTEYVFEENVLYISDERFSPELARKWGVPSGPMFGELAKGQSVMIEGNTVLPEMVHERTQKSLVLRNVIF.

Belongs to the DtdA deacylase family. In terms of assembly, monomer. The cofactor is Zn(2+).

The enzyme catalyses a D-aminoacyl-tRNA + H2O = a tRNA + a D-alpha-amino acid + H(+). It catalyses the reaction glycyl-tRNA(Ala) + H2O = tRNA(Ala) + glycine + H(+). Its function is as follows. D-aminoacyl-tRNA deacylase with broad substrate specificity. By recycling D-aminoacyl-tRNA to D-amino acids and free tRNA molecules, this enzyme counteracts the toxicity associated with the formation of D-aminoacyl-tRNA entities in vivo. This chain is D-aminoacyl-tRNA deacylase, found in Methanococcoides burtonii (strain DSM 6242 / NBRC 107633 / OCM 468 / ACE-M).